The primary structure comprises 255 residues: Microfibril-associated glycoprotein 4 (255 aa).

The N-terminal stretch at 1–20 (MEALLVLPLLLLLSAGPCAP) is a signal peptide. The Cell attachment site signature appears at 26 to 28 (RGD). The Fibrinogen C-terminal domain maps to 32–255 (KSCLQLPLDC…KRTEMKIRRA (224 aa)). Residues asparagine 87 and asparagine 137 are each glycosylated (N-linked (GlcNAc...) asparagine).

As to quaternary structure, homodimer. Can also form higher oligomers. Interacts with FBN1, FBN2 and LOX. Interacts with COL1A1 in a Ca (2+)-dependent manner. Interacts with ELN in a Ca (2+)-dependent manner; this interaction promotes ELN self-assembly.

Its subcellular location is the secreted. The protein localises to the extracellular space. It is found in the extracellular matrix. Could be involved in calcium-dependent cell adhesion or intercellular interactions. May contribute to the elastic fiber assembly and/or maintenance. This chain is Microfibril-associated glycoprotein 4 (MFAP4), found in Bos taurus (Bovine).